A 408-amino-acid chain; its full sequence is Elongation factor Tu (408 aa).

In terms of domain architecture, tr-type G spans 10-219; that stretch reads KTHVNVGTIG…ALDTYIPDPV (210 aa). Residues 19-26, 88-92, and 143-146 each bind GTP; these read GHVDHGKT, DCPGH, and NKCD. T26 is a binding site for Mg(2+).

Belongs to the TRAFAC class translation factor GTPase superfamily. Classic translation factor GTPase family. EF-Tu/EF-1A subfamily. As to quaternary structure, monomer.

It localises to the cytoplasm. It carries out the reaction GTP + H2O = GDP + phosphate + H(+). Functionally, GTP hydrolase that promotes the GTP-dependent binding of aminoacyl-tRNA to the A-site of ribosomes during protein biosynthesis. The polypeptide is Elongation factor Tu (Brachyspira hyodysenteriae (strain ATCC 49526 / WA1)).